A 707-amino-acid polypeptide reads, in one-letter code: E3 ubiquitin-protein ligase Praja-2 (707 aa).

The segment covering 1-10 (MSQYTEKEPS) has biased composition (basic and acidic residues). Disordered stretches follow at residues 1 to 23 (MSQY…AWPR), 75 to 120 (NTAG…PSVA), and 242 to 290 (AGDA…CVPG). S2 is modified (N-acetylserine). A compositionally biased stretch (polar residues) spans 109 to 119 (LNQSTESNPSV). Residues 246-276 (EAVHQDGQEFQRSSEDGIVRKRRQDDTDQGR) show a composition bias toward basic and acidic residues. S306 and S320 each carry phosphoserine. S339 bears the Phosphoserine; by PKA mark. 2 disordered regions span residues 380–403 (VTPR…GRQE) and 424–493 (EDSS…QTSL). Positions 381–391 (TPREAERHRAT) are enriched in basic and acidic residues. S430 bears the Phosphoserine mark. The segment covering 465–481 (NEPELQSDSSGPEEENQ) has biased composition (acidic residues). Positions 482 to 491 (ELSLQEGEQT) are enriched in polar residues. The interaction with PRKAR1A, PRKAR2A and PRKAR2B stretch occupies residues 530–707 (DGNNNLEDDS…PANDNAEEAP (178 aa)). The interval 549-569 (WSLFDGFADGLGVAEAISYVD) is mediates interaction with TBC1D31. An RING-type; atypical zinc finger spans residues 633–674 (CPICCSEYIKDDIATELPCHHFFHKPCVSIWLQKSGTCPVCR). Residues 686–707 (AAASSEPDLDASPANDNAEEAP) form a disordered region.

In terms of assembly, binds ubiquitin-conjugating enzymes (E2s). In vitro, interacts with the ubiquitin-conjugating enzyme, UBE2D2. The phosphorylated form interacts with PRKAR1A, PRKAR2A and PRKAR2B. Binds the catalytic subunits of cAMP-dependent protein kinase. Interacts with MFHAS1. Interacts with TBC1D31; the interaction is direct and recruits PJA2 to centrosomes. In terms of tissue distribution, highly expressed in the brain, in nerve cells but not in glial cells. Abundantly expressed in pyramidal neurons and in the CA3 region of apical dendrites. Colocalizes with PRKAR2B in dentate granule cells and at postsynaptic sites of primary hippocampal neurons.

The protein resides in the cytoplasm. It localises to the cell membrane. Its subcellular location is the endoplasmic reticulum membrane. The protein localises to the golgi apparatus membrane. It is found in the synapse. The protein resides in the postsynaptic density. It localises to the cytoskeleton. Its subcellular location is the microtubule organizing center. The protein localises to the centrosome. The enzyme catalyses S-ubiquitinyl-[E2 ubiquitin-conjugating enzyme]-L-cysteine + [acceptor protein]-L-lysine = [E2 ubiquitin-conjugating enzyme]-L-cysteine + N(6)-ubiquitinyl-[acceptor protein]-L-lysine.. It participates in protein modification; protein ubiquitination. In terms of biological role, has E2-dependent E3 ubiquitin-protein ligase activity. Responsible for ubiquitination of cAMP-dependent protein kinase type I and type II-alpha/beta regulatory subunits and for targeting them for proteasomal degradation. Essential for PKA-mediated long-term memory processes. Through the ubiquitination of MFHAS1, positively regulates the TLR2 signaling pathway that leads to the activation of the downstream p38 and JNK MAP kinases and promotes the polarization of macrophages toward the pro-inflammatory M1 phenotype. Plays a role in ciliogenesis by ubiquitinating OFD1. The polypeptide is E3 ubiquitin-protein ligase Praja-2 (Pja2) (Rattus norvegicus (Rat)).